Here is a 118-residue protein sequence, read N- to C-terminus: Large ribosomal subunit protein uL22 (118 aa).

Belongs to the universal ribosomal protein uL22 family. As to quaternary structure, part of the 50S ribosomal subunit.

Functionally, this protein binds specifically to 23S rRNA; its binding is stimulated by other ribosomal proteins, e.g. L4, L17, and L20. It is important during the early stages of 50S assembly. It makes multiple contacts with different domains of the 23S rRNA in the assembled 50S subunit and ribosome. In terms of biological role, the globular domain of the protein is located near the polypeptide exit tunnel on the outside of the subunit, while an extended beta-hairpin is found that lines the wall of the exit tunnel in the center of the 70S ribosome. The chain is Large ribosomal subunit protein uL22 from Prosthecochloris aestuarii (strain DSM 271 / SK 413).